Here is a 325-residue protein sequence, read N- to C-terminus: Elongation factor P--(R)-beta-lysine ligase (325 aa).

76-78 (SPE) provides a ligand contact to substrate. Residues 100–102 (RNE) and Asn109 contribute to the ATP site. Residue Tyr118 coordinates substrate. Residue 244–245 (EL) coordinates ATP. Glu251 contacts substrate. Position 300 (Gly300) interacts with ATP.

It belongs to the class-II aminoacyl-tRNA synthetase family. EpmA subfamily. In terms of assembly, homodimer.

It carries out the reaction D-beta-lysine + L-lysyl-[protein] + ATP = N(6)-((3R)-3,6-diaminohexanoyl)-L-lysyl-[protein] + AMP + diphosphate + H(+). Functionally, with EpmB is involved in the beta-lysylation step of the post-translational modification of translation elongation factor P (EF-P). Catalyzes the ATP-dependent activation of (R)-beta-lysine produced by EpmB, forming a lysyl-adenylate, from which the beta-lysyl moiety is then transferred to the epsilon-amino group of a conserved specific lysine residue in EF-P. The chain is Elongation factor P--(R)-beta-lysine ligase from Edwardsiella ictaluri (strain 93-146).